The following is a 493-amino-acid chain: MLAATVLTLALLGNAHACSKGTSHEAGIVCRITKPALLVLNHETAKVIQTAFQRASYPDITGEKAMMLLGQVKYGLHNIQISHLSIASSQVELVEAKSIDVSIQNVSVVFKGTLKYGYTTAWWLGIDQSIDFEIDSAIDLQINTQLTCDSGRVRTDAPDCYLSFHKLLLHLQGEREPGWIKQLFTNFISFTLKLVLKGQICKEINVISNIMADFVQTRAASILSDGDIGVDISLTGDPVITASYLESHHKGHFIYKNVSEDLPLPTFSPTLLGDSRMLYFWFSERVFHSLAKVAFQDGRLMLSLMGDEFKAVLETWGFNTNQEIFQEVVGGFPSQAQVTVHCLKMPKISCQNKGVVVNSSVMVKFLFPRPDQQHSVAYTFEEDIVTTVQASYSKKKLFLSLLDFQITPKTVSNLTESSSESVQSFLQSMITAVGIPEVMSRLEVVFTALMNSKGVSLFDIINPEIITRDGFLLLQMDFGFPEHLLVDFLQSLS.

Positions methionine 1–alanine 17 are cleaved as a signal peptide. Asparagine 105 carries N-linked (GlcNAc...) (complex) asparagine glycosylation. Cysteine 160 and cysteine 201 are oxidised to a cystine. N-linked (GlcNAc...) asparagine glycosylation is found at asparagine 257, asparagine 358, and asparagine 413.

This sequence belongs to the BPI/LBP/Plunc superfamily. BPI/LBP family. Expressed by the liver and secreted in plasma.

Its subcellular location is the secreted. It carries out the reaction cholesteryl (9Z-octadecenoate)(in) = cholesteryl (9Z-octadecenoate)(out). The enzyme catalyses 1,2,3-tri-(9Z-octadecenoyl)-glycerol(in) = 1,2,3-tri-(9Z-octadecenoyl)-glycerol(out). It catalyses the reaction cholesteryl (9Z,12Z)-octadecadienoate(in) = cholesteryl (9Z,12Z)-octadecadienoate(out). Involved in the transfer of neutral lipids, including cholesteryl ester and triglyceride, among lipoprotein particles. Allows the net movement of cholesteryl ester from high density lipoproteins/HDL to triglyceride-rich very low density lipoproteins/VLDL, and the equimolar transport of triglyceride from VLDL to HDL. Regulates the reverse cholesterol transport, by which excess cholesterol is removed from peripheral tissues and returned to the liver for elimination. The protein is Cholesteryl ester transfer protein of Homo sapiens (Human).